We begin with the raw amino-acid sequence, 70 residues long: Protein SlyX homolog (70 aa).

This sequence belongs to the SlyX family.

In Rhizobium meliloti (strain 1021) (Ensifer meliloti), this protein is Protein SlyX homolog.